The primary structure comprises 953 residues: Coatomer subunit beta (953 aa).

N-acetylthreonine is present on Thr2. HEAT repeat units follow at residues 96–131, 132–168, 240–276, 277–314, 316–353, and 396–433; these read HEMI…KEAE, LLEP…NFEH, SERA…SAPT, AIKA…HPAH, RVLQ…SRNV, and DMAA…RFDN. Lys494 carries the N6-acetyllysine modification.

Oligomeric complex that consists of at least the alpha, beta, beta', gamma, delta, epsilon and zeta subunits. Interacts with CAPN8 and PRKCE. Interacts with SCYL1. Interacts with COPG1. Interacts with ARF1 (myristoylated); this interaction is required for binding of COPB1 to Golgi membranes. Interacts (via trunk domain) with ARF1 (via switch I region); the interaction is direct. Interacts with KCNK2 (via N-terminus); this interaction increases the channel-mediated whole cell currents and promotes plasma membrane expression of KCNK2. Interacts with STX17. Interacts with TMEM115. Interacts with TMEM41B. In terms of tissue distribution, high expression in the lung, kidney, skeletal muscle and small intestine, and lower level of expression in heart, liver, spleen, stomach and fat.

The protein resides in the cytoplasm. The protein localises to the golgi apparatus membrane. Its subcellular location is the cytoplasmic vesicle. It localises to the COPI-coated vesicle membrane. It is found in the cell membrane. The protein resides in the endoplasmic reticulum-Golgi intermediate compartment. Functionally, the coatomer is a cytosolic protein complex that binds to dilysine motifs and reversibly associates with Golgi non-clathrin-coated vesicles, which further mediate biosynthetic protein transport from the ER, via the Golgi up to the trans Golgi network. Coatomer complex is required for budding from Golgi membranes, and is essential for the retrograde Golgi-to-ER transport of dilysine-tagged proteins. In mammals, the coatomer can only be recruited by membranes associated to ADP-ribosylation factors (ARFs), which are small GTP-binding proteins; the complex also influences the Golgi structural integrity, as well as the processing, activity, and endocytic recycling of LDL receptors. Plays a functional role in facilitating the transport of kappa-type opioid receptor mRNAs into axons and enhances translation of these proteins. Required for limiting lipid storage in lipid droplets. Involved in lipid homeostasis by regulating the presence of perilipin family members PLIN2 and PLIN3 at the lipid droplet surface and promoting the association of adipocyte surface triglyceride lipase (PNPLA2) with the lipid droplet to mediate lipolysis. Involved in the Golgi disassembly and reassembly processes during cell cycle. Involved in autophagy by playing a role in early endosome function. Plays a role in organellar compartmentalization of secretory compartments including endoplasmic reticulum (ER)-Golgi intermediate compartment (ERGIC), Golgi, trans-Golgi network (TGN) and recycling endosomes, and in biosynthetic transport of CAV1. The protein is Coatomer subunit beta of Sus scrofa (Pig).